We begin with the raw amino-acid sequence, 521 residues long: Anaerobic nitric oxide reductase flavorubredoxin (521 aa).

Residues 30 to 210 (HKGTSYNSYL…PFSPLVTAKI (181 aa)) form a zinc metallo-hydrolase region. Fe cation contacts are provided by His-79, Glu-81, Asp-83, His-147, Asp-166, and His-227. Residues 254–393 (ITLFYDSMSN…LCREHGRQLA (140 aa)) form the Flavodoxin-like domain. FMN is bound by residues 260–264 (SMSNN) and 342–369 (AFGSYGWTGGAVDRIQTRLMDAGFDISI). Positions 464–515 (DQPMLCTVCQWIYDPALGEPDQLVAPGTPWARVPDSFLCPGCGIGKEVFEPC) constitute a Rubredoxin-like domain. Fe cation-binding residues include Cys-469, Cys-472, Cys-502, and Cys-505.

It in the N-terminal section; belongs to the zinc metallo-hydrolase group 3 family. Homotetramer. Fe cation serves as cofactor. Requires FMN as cofactor.

The protein resides in the cytoplasm. Its pathway is nitrogen metabolism; nitric oxide reduction. Functionally, anaerobic nitric oxide reductase; uses NADH to detoxify nitric oxide (NO), protecting several 4Fe-4S NO-sensitive enzymes. Has at least 2 reductase partners, only one of which (NorW, flavorubredoxin reductase) has been identified. NO probably binds to the di-iron center; electrons enter from the NorW at rubredoxin and are transferred sequentially to the FMN center and the di-iron center. Also able to function as an aerobic oxygen reductase. The polypeptide is Anaerobic nitric oxide reductase flavorubredoxin (Aeromonas salmonicida (strain A449)).